Here is a 447-residue protein sequence, read N- to C-terminus: Sporulation protein YpeB (447 aa).

It belongs to the YpeB family.

Its function is as follows. Required for spore cortex hydrolysis during germination. Appears to be required for either expression, localization, activation or function of SleB. In Halalkalibacterium halodurans (strain ATCC BAA-125 / DSM 18197 / FERM 7344 / JCM 9153 / C-125) (Bacillus halodurans), this protein is Sporulation protein YpeB.